The chain runs to 244 residues: uncharacterized protein (244 aa).

This is an uncharacterized protein from Ostreid herpesvirus 1 (isolate France) (OsHV-1).